Here is a 193-residue protein sequence, read N- to C-terminus: Superoxide dismutase [Fe] (193 aa).

Fe cation-binding residues include histidine 27, histidine 74, aspartate 157, and histidine 161.

This sequence belongs to the iron/manganese superoxide dismutase family. Homodimer. Requires Fe cation as cofactor.

The enzyme catalyses 2 superoxide + 2 H(+) = H2O2 + O2. In terms of biological role, destroys superoxide anion radicals which are normally produced within the cells and which are toxic to biological systems. The protein is Superoxide dismutase [Fe] (sodB) of Coxiella burnetii (strain RSA 493 / Nine Mile phase I).